The following is a 1129-amino-acid chain: Phytochrome A type 4 (1129 aa).

The span at 1 to 21 (MSSSRPASSSSSRNRQSSRAR) shows a compositional bias: low complexity. Residues 1–24 (MSSSRPASSSSSRNRQSSRARVLA) form a disordered region. The region spanning 217–402 (SMEVLCNTVV…VFAVHVNREF (186 aa)) is the GAF domain. Position 322 (C322) interacts with phytochromobilin. 2 PAS domains span residues 618–688 (VTSE…LQGK) and 748–822 (VEGD…VSLC). The region spanning 902–1122 (YMRHAINNPL…TFILTAELAS (221 aa)) is the Histidine kinase domain.

The protein belongs to the phytochrome family. Homodimer. In terms of processing, contains one covalently linked phytochromobilin chromophore.

Regulatory photoreceptor which exists in two forms that are reversibly interconvertible by light: the Pr form that absorbs maximally in the red region of the spectrum and the Pfr form that absorbs maximally in the far-red region. Photoconversion of Pr to Pfr induces an array of morphogenic responses, whereas reconversion of Pfr to Pr cancels the induction of those responses. Pfr controls the expression of a number of nuclear genes including those encoding the small subunit of ribulose-bisphosphate carboxylase, chlorophyll A/B binding protein, protochlorophyllide reductase, rRNA, etc. It also controls the expression of its own gene(s) in a negative feedback fashion. This is Phytochrome A type 4 (PHYA4) from Avena sativa (Oat).